Here is a 345-residue protein sequence, read N- to C-terminus: L-threonine 3-dehydrogenase (345 aa).

Zn(2+) is bound at residue Cys-42. Catalysis depends on charge relay system residues Thr-44 and His-47. Zn(2+)-binding residues include His-67, Glu-68, Cys-97, Cys-100, Cys-103, and Cys-111. NAD(+) is bound by residues Ile-179, Asp-199, Arg-204, 266–268, and 290–291; these read LGI and IY.

The protein belongs to the zinc-containing alcohol dehydrogenase family. Homotetramer. Zn(2+) is required as a cofactor.

It localises to the cytoplasm. It catalyses the reaction L-threonine + NAD(+) = (2S)-2-amino-3-oxobutanoate + NADH + H(+). Its pathway is amino-acid degradation; L-threonine degradation via oxydo-reductase pathway; glycine from L-threonine: step 1/2. Functionally, catalyzes the NAD(+)-dependent oxidation of L-threonine to 2-amino-3-ketobutyrate. This chain is L-threonine 3-dehydrogenase, found in Rhizobium etli (strain ATCC 51251 / DSM 11541 / JCM 21823 / NBRC 15573 / CFN 42).